The following is a 333-amino-acid chain: Protein APEM9 (333 aa).

Residues 1 to 90 (MEATDIWGEI…ELRDVFGEVA (90 aa)) are Cytoplasmic-facing. The chain crosses the membrane as a helical span at residues 91–102 (AIPVQVLLTGVC). The Peroxisomal segment spans residues 103–268 (LQISNGSYLG…KVGNTQFSMS (166 aa)). A helical membrane pass occupies residues 269–285 (RGKVAVSLVGLIICYAL). Over 286 to 333 (KRKRAALIRIIRRQMESTRKAIVDFWKLAFSYQVNPLAAIQSIPSTTT) the chain is Cytoplasmic.

In terms of assembly, interacts with PEX6 and PEX19-1, but not with PEX1. Interacts (via N-terminus) with PEX13, and (via N-terminus and C-terminus) with PEX16. As to expression, expressed in roots, leaves, stems, flowers, buds and fruits.

The protein localises to the peroxisome membrane. In terms of biological role, involved in peroxisome biogenesis and matrix protein import. Required for pollen maturation and in vivo germination via its role in peroxisomal function, which partially involves jasmonic acid biosynthesis. Transported to peroxisomes via the interaction with PEX19-1. Required for peroxisomal protein import by acting as an anchoring protein for the AAA ATPase complex, which consists of PEX1 and PEX6. The chain is Protein APEM9 from Arabidopsis thaliana (Mouse-ear cress).